A 261-amino-acid polypeptide reads, in one-letter code: Sepiapterin reductase (261 aa).

Position 1 is an N-acetylmethionine (M1). 14 to 20 (GASRGFG) contributes to the NADP(+) binding site. S32 is modified (phosphoserine). NADP(+) is bound by residues 42-43 (RN) and 69-70 (DL). S103 carries the phosphoserine modification. Residues 157–158 (SL) and Y170 each bind substrate. K174 contributes to the NADP(+) binding site. A substrate-binding site is contributed by G199. Residue 201 to 206 (LDTDMQ) participates in NADP(+) binding. S213 carries the post-translational modification Phosphoserine; by CaMK2; in vitro. D257 serves as a coordination point for substrate.

This sequence belongs to the sepiapterin reductase family. In terms of assembly, homodimer. Post-translationally, in vitro phosphorylation of Ser-213 by CaMK2 does not change kinetic parameters.

It is found in the cytoplasm. It catalyses the reaction L-erythro-7,8-dihydrobiopterin + NADP(+) = L-sepiapterin + NADPH + H(+). The enzyme catalyses (6R)-L-erythro-5,6,7,8-tetrahydrobiopterin + 2 NADP(+) = 6-pyruvoyl-5,6,7,8-tetrahydropterin + 2 NADPH + 2 H(+). In terms of biological role, catalyzes the final one or two reductions in tetra-hydrobiopterin biosynthesis to form 5,6,7,8-tetrahydrobiopterin. In Homo sapiens (Human), this protein is Sepiapterin reductase (SPR).